Reading from the N-terminus, the 338-residue chain is Fructose-1,6-bisphosphatase class 1 1 (338 aa).

Residues Glu91, Asp113, Leu115, and Asp116 each coordinate Mg(2+). Substrate contacts are provided by residues 116-119 (DGSS), Asn208, and Lys274. Glu280 serves as a coordination point for Mg(2+).

Belongs to the FBPase class 1 family. Homotetramer. Mg(2+) serves as cofactor.

Its subcellular location is the cytoplasm. It catalyses the reaction beta-D-fructose 1,6-bisphosphate + H2O = beta-D-fructose 6-phosphate + phosphate. Its pathway is carbohydrate biosynthesis; gluconeogenesis. This Cupriavidus metallidurans (strain ATCC 43123 / DSM 2839 / NBRC 102507 / CH34) (Ralstonia metallidurans) protein is Fructose-1,6-bisphosphatase class 1 1.